A 402-amino-acid polypeptide reads, in one-letter code: MSKNLILILNCGSSSLKFAVLDPKTGDEKLSGLAEAFNLEDARIKWKLHGEKGNADLGAGAAHSEALTFIANELLSEELRSSIGAIGHRIVHGGEQFTSSVVINDDVVKGIEHAIQFAPLHNPAHLIGIKEAFRIFPELKEKNVAVFDTAFHQTMPEEAFLYALPYKLYKEHGIRRYGAHGTSHLFITSQVAELAGKPVDQTNAIICHLGNGGSVSVVRNGKCIDTSMGLTPLEGLVMGTRSGDIDPAIVFYLYKNLGMSMEQIEDTLVKKSGLLGLTEVTSDCRYAEDNYEDASKPEAKRALDVYSYRLAKYIGAYMAILGDDHLDAIAFTGGIGENSGHVRELALNHLKLFGVKLDVERNLAARFGKSGVITADDSTFKAVVIPTNEELVIAQDTAKLAL.

Asparagine 10 serves as a coordination point for Mg(2+). Lysine 17 serves as a coordination point for ATP. Arginine 89 contributes to the substrate binding site. Aspartate 148 acts as the Proton donor/acceptor in catalysis. ATP-binding positions include 208–212 (HLGNG), 283–285 (DCR), and 334–338 (GIGEN). Position 389 (glutamate 389) interacts with Mg(2+).

It belongs to the acetokinase family. Homodimer. Requires Mg(2+) as cofactor. Mn(2+) is required as a cofactor.

It localises to the cytoplasm. The enzyme catalyses acetate + ATP = acetyl phosphate + ADP. It participates in metabolic intermediate biosynthesis; acetyl-CoA biosynthesis; acetyl-CoA from acetate: step 1/2. Its function is as follows. Catalyzes the formation of acetyl phosphate from acetate and ATP. Can also catalyze the reverse reaction. This Actinobacillus pleuropneumoniae serotype 5b (strain L20) protein is Acetate kinase.